Consider the following 86-residue polypeptide: Protein GOLVEN 1 (86 aa).

The N-terminal stretch at 1 to 29 is a signal peptide; it reads MSCSLRSGLVIVFCFILLLLSSNVGCASA. A propeptide spanning residues 30 to 70 is cleaved from the precursor; sequence ARRLRSHKHHHHKVASLDVFNGGERRRALGGVETGEEVVVM. Residue Y72 is modified to Sulfotyrosine. P80 carries the hydroxyproline modification. The propeptide occupies 84-86; it reads EKS.

It belongs to the RGF family. In terms of assembly, binds to LRR receptor-like serine/threonine-protein kinases to trigger their dimerization with SERK proteins and subsequent signaling. In terms of tissue distribution, expressed in stems, hypocotyls, cotyledons, leaves, flowers, shoot apex, siliques, stamens and petals.

Its subcellular location is the endoplasmic reticulum. The protein localises to the secreted. Functionally, signaling peptide (root growth factor) that regulates the pattern of root growth and lateral root development by modulating the length and the number of cortical cells in the root apical meristem (RAM), and the anticlinal asymmetric cell divisions in lateral root initiation cells. Also involved in the regulation of hypocotyl bending and root gravitropism in a PIN2-traffic dependent manner, thus influencing the formation of auxin gradients. Maintains the postembryonic root stem cell niche. This Arabidopsis thaliana (Mouse-ear cress) protein is Protein GOLVEN 1.